The sequence spans 173 residues: Translation initiation factor IF-3 (173 aa).

Belongs to the IF-3 family. As to quaternary structure, monomer.

The protein localises to the cytoplasm. IF-3 binds to the 30S ribosomal subunit and shifts the equilibrium between 70S ribosomes and their 50S and 30S subunits in favor of the free subunits, thus enhancing the availability of 30S subunits on which protein synthesis initiation begins. The protein is Translation initiation factor IF-3 of Methylobacterium radiotolerans (strain ATCC 27329 / DSM 1819 / JCM 2831 / NBRC 15690 / NCIMB 10815 / 0-1).